Consider the following 118-residue polypeptide: Small ribosomal subunit protein mS41 (118 aa).

The transit peptide at 1–24 directs the protein to the mitochondrion; sequence MLRVVAKAQYPAAVRCFSTSHAAF.

This sequence belongs to the mitochondrion-specific ribosomal protein mS41 family.

Its subcellular location is the mitochondrion. Its function is as follows. Involved in telomere length regulation. The polypeptide is Small ribosomal subunit protein mS41 (FYV4) (Yarrowia lipolytica (strain CLIB 122 / E 150) (Yeast)).